Consider the following 350-residue polypeptide: Hydroxymethylglutaryl-CoA synthase (350 aa).

Glu-83 serves as the catalytic Proton donor/acceptor. Cys-115 (acyl-thioester intermediate) is an active-site residue. (3S)-3-hydroxy-3-methylglutaryl-CoA-binding residues include Cys-115 and Thr-156. Arg-204 is a CoA binding site. Positions 206 and 239 each coordinate (3S)-3-hydroxy-3-methylglutaryl-CoA. His-239 serves as the catalytic Proton donor/acceptor. Lys-244 contacts CoA. Residues Asn-271 and Ser-301 each coordinate (3S)-3-hydroxy-3-methylglutaryl-CoA.

This sequence belongs to the thiolase-like superfamily. Archaeal HMG-CoA synthase family. Interacts with acetoacetyl-CoA thiolase that catalyzes the precedent step in the pathway and with a DUF35 protein. The acetoacetyl-CoA thiolase/HMG-CoA synthase complex channels the intermediate via a fused CoA-binding site, which allows for efficient coupling of the endergonic thiolase reaction with the exergonic HMGCS reaction.

The catalysed reaction is acetoacetyl-CoA + acetyl-CoA + H2O = (3S)-3-hydroxy-3-methylglutaryl-CoA + CoA + H(+). The protein operates within metabolic intermediate biosynthesis; (R)-mevalonate biosynthesis; (R)-mevalonate from acetyl-CoA: step 2/3. Its function is as follows. Catalyzes the condensation of acetyl-CoA with acetoacetyl-CoA to form 3-hydroxy-3-methylglutaryl-CoA (HMG-CoA). Functions in the mevalonate (MVA) pathway leading to isopentenyl diphosphate (IPP), a key precursor for the biosynthesis of isoprenoid compounds that are building blocks of archaeal membrane lipids. This is Hydroxymethylglutaryl-CoA synthase from Pyrococcus furiosus (strain ATCC 43587 / DSM 3638 / JCM 8422 / Vc1).